Reading from the N-terminus, the 341-residue chain is HTH-type transcriptional repressor PurR (341 aa).

The 55-residue stretch at 2 to 56 (ATIKDVAKHAGVSTTTVSHVINKTRFVAEDTKAAVWAAIKALNYSPSAVARSLKV) folds into the HTH lacI-type domain. A DNA-binding region (H-T-H motif) is located at residues 4–23 (IKDVAKHAGVSTTTVSHVIN). Residues 48–56 (SAVARSLKV) mediate DNA binding. Hypoxanthine is bound by residues Tyr-73, Arg-190, Thr-192, Phe-221, and Asp-275.

In terms of assembly, homodimer.

It participates in purine metabolism; purine nucleotide biosynthesis [regulation]. Is the main repressor of the genes involved in the de novo synthesis of purine nucleotides, regulating purB, purC, purEK, purF, purHD, purL, purMN and guaBA expression. PurR is allosterically activated to bind its cognate DNA by binding the purine corepressors, hypoxanthine or guanine, thereby effecting transcription repression. This Photorhabdus laumondii subsp. laumondii (strain DSM 15139 / CIP 105565 / TT01) (Photorhabdus luminescens subsp. laumondii) protein is HTH-type transcriptional repressor PurR.